A 148-amino-acid polypeptide reads, in one-letter code: Ribonuclease pancreatic (148 aa).

A signal peptide spans 1–25; the sequence is MGLEKSLMLFPLLVLVLGLVQPSLG. Residues Lys32 and Arg35 each coordinate substrate. Catalysis depends on His37, which acts as the Proton acceptor. Intrachain disulfides connect Cys50–Cys108, Cys64–Cys119, Cys82–Cys134, and Cys89–Cys96. Substrate is bound by residues 65–69, Lys90, and Arg109; that span reads KPVNT. His143 functions as the Proton donor in the catalytic mechanism.

Belongs to the pancreatic ribonuclease family. Monomer. Interacts with and forms tight 1:1 complexes with RNH1. Dimerization of two such complexes may occur. Interaction with RNH1 inhibits this protein. As to expression, pancreas.

It localises to the secreted. The enzyme catalyses an [RNA] containing cytidine + H2O = an [RNA]-3'-cytidine-3'-phosphate + a 5'-hydroxy-ribonucleotide-3'-[RNA].. The catalysed reaction is an [RNA] containing uridine + H2O = an [RNA]-3'-uridine-3'-phosphate + a 5'-hydroxy-ribonucleotide-3'-[RNA].. In terms of biological role, endonuclease that catalyzes the cleavage of RNA on the 3' side of pyrimidine nucleotides. Acts on single-stranded and double-stranded RNA. In Gerbilliscus gambianus (Gambian gerbil), this protein is Ribonuclease pancreatic (RNASE1).